A 470-amino-acid polypeptide reads, in one-letter code: Methylenetetrahydrofolate--tRNA-(uracil-5-)-methyltransferase TrmFO (470 aa).

An FAD-binding site is contributed by 10–15 (GAGLAG).

Belongs to the MnmG family. TrmFO subfamily. FAD is required as a cofactor.

It localises to the cytoplasm. It catalyses the reaction uridine(54) in tRNA + (6R)-5,10-methylene-5,6,7,8-tetrahydrofolate + NADH + H(+) = 5-methyluridine(54) in tRNA + (6S)-5,6,7,8-tetrahydrofolate + NAD(+). It carries out the reaction uridine(54) in tRNA + (6R)-5,10-methylene-5,6,7,8-tetrahydrofolate + NADPH + H(+) = 5-methyluridine(54) in tRNA + (6S)-5,6,7,8-tetrahydrofolate + NADP(+). Catalyzes the folate-dependent formation of 5-methyl-uridine at position 54 (M-5-U54) in all tRNAs. The chain is Methylenetetrahydrofolate--tRNA-(uracil-5-)-methyltransferase TrmFO from Prochlorococcus marinus (strain MIT 9215).